A 285-amino-acid chain; its full sequence is Urease accessory protein UreD (285 aa).

This sequence belongs to the UreD family. UreD, UreF and UreG form a complex that acts as a GTP-hydrolysis-dependent molecular chaperone, activating the urease apoprotein by helping to assemble the nickel containing metallocenter of UreC. The UreE protein probably delivers the nickel.

It is found in the cytoplasm. Its function is as follows. Required for maturation of urease via the functional incorporation of the urease nickel metallocenter. The chain is Urease accessory protein UreD from Methylobacillus flagellatus (strain ATCC 51484 / DSM 6875 / VKM B-1610 / KT).